The chain runs to 436 residues: Homeobox protein PKNOX1 (436 aa).

A disordered region spans residues 23–50; the sequence is ELKTEQDPNCSDPDAEGVSPPPIESQTP. Phosphoserine is present on residues Ser-33 and Ser-41. The MEIS N-terminal domain maps to 80–163; that stretch reads GSEGTTSASF…MNSETLLSGE (84 aa). Positions 259-321 form a DNA-binding region, homeobox; TALE-type; that stretch reads SKNKRGVLPK…NARRRILQPM (63 aa). The segment at 401–436 is disordered; sequence AGQSEDESVDSTEDEGGALAPTHISGLVLENSDSLQ. Acidic residues predominate over residues 404 to 416; it reads SEDESVDSTEDEG.

This sequence belongs to the TALE/MEIS homeobox family. In terms of assembly, interacts with MN1.

Its subcellular location is the nucleus. Functionally, activates transcription in the presence of PBX1A and HOXA1. In terms of biological role, (Microbial infection) In complex with PBX1, binds to the 5'-TGATTGAC-3' consensus sequence in the U5 region of Moloney murine leukemia virus and promotes viral transcription. This chain is Homeobox protein PKNOX1, found in Mus musculus (Mouse).